Reading from the N-terminus, the 896-residue chain is Sodium/hydrogen exchanger 5 (896 aa).

Topologically, residues 1–45 (MLRAALSLLALPLAGAAEEPTQKPESPGEPPPGLELFRWQWHEVE) are cytoplasmic. The helical transmembrane segment at 46–66 (APYLVALWILVASLAKIVFHL) threads the bilayer. Over 67-73 (SRKVTSL) the chain is Extracellular. A helical membrane pass occupies residues 74–94 (VPESCLLILLGLVLGGIVLAV). Over 95–103 (AKKAEYQLE) the chain is Cytoplasmic. Residues 104–124 (PGTFFLFLLPPIVLDSGYFMP) traverse the membrane as a helical segment. Residues 125–134 (SRLFFDNLGA) are Extracellular-facing. A helical transmembrane segment spans residues 135–155 (ILTYAVVGTLWNAFTTGAALW). Residues 156–173 (GLQQAGLVAPRVQAGLLD) lie on the Cytoplasmic side of the membrane. A helical membrane pass occupies residues 174 to 194 (FLLFGSLISAVDPVAVLAVFE). Residues 195-200 (EVHVNE) are Extracellular-facing. N-linked (GlcNAc...) asparagine glycosylation is present at asparagine 199. A helical transmembrane segment spans residues 201-221 (TLFIIVFGESLLNDAVTVVLY). The Cytoplasmic portion of the chain corresponds to 222–246 (KVCNSFVEMGSANVQATDYLKGVAS). Residues 247–267 (LFVVSLGGAAVGLVFAFLLAL) form a helical membrane-spanning segment. The Extracellular segment spans residues 268-276 (TTRFTKRVR). The chain crosses the membrane as a helical span at residues 277 to 297 (IIEPLLVFLLAYAAYLTAEMA). The Cytoplasmic portion of the chain corresponds to 298 to 331 (SLSAILAVTMCGLGCKKYVEANISHKSRTTVKYT). The chain crosses the membrane as a helical span at residues 332–352 (MKTLASCAETVIFMLLGISAV). The Extracellular segment spans residues 353-360 (DSSKWAWD). A helical membrane pass occupies residues 361 to 381 (SGLVLGTLIFILFFRALGVVL). Residues 382–398 (QTWVLNQFRLVPLDKID) lie on the Cytoplasmic side of the membrane. The helical transmembrane segment at 399–419 (QVVMSYGGLRGAVAFALVILL) threads the bilayer. The Extracellular segment spans residues 420 to 428 (DRTKVPAKD). The helical transmembrane segment at 429–449 (YFVATTIVVVFFTVIVQGLTI) threads the bilayer. Residues 450–896 (KPLVKWLKVK…CIQFNRGSRL (447 aa)) lie on the Cytoplasmic side of the membrane. Residues 576-721 (GSGACLDLQV…SETEKEDDEG (146 aa)) are required for interaction with ARRB2. Disordered regions lie at residues 658 to 686 (TKSK…GKHR), 701 to 720 (ESEE…EDDE), and 818 to 864 (HPRG…QQQE). Basic residues predominate over residues 660–672 (SKPRPRKTGRRKK). Over residues 854–864 (ESSADLPQQQE) the composition is skewed to polar residues.

This sequence belongs to the monovalent cation:proton antiporter 1 (CPA1) transporter (TC 2.A.36) family. Interacts with CHP1 and CHP2. Interacts with ARRB2; facilitates the endocytosis of SLC9A5 from the plasma membrane. Interacts with RACK1; this interaction positively regulates SLC9A5 activity and promotes SLC9A5 localization to focal adhesions. Interacts with SCAMP2; this interaction regulates SLC9A5 cell-surface targeting and SLC9A5 activity. In terms of processing, phosphorylated by PRKAA2; promotes its accumulation at the cell surface. Phosphorylated by CSNK2A1 in a manner favoring its beta-arrestin binding and endocytosis. In terms of tissue distribution, mainly expressed in brain. Expressed in neurons of the central and peripheral nervous system. Expressed also in testis, spleen, and skeletal muscle.

The protein localises to the cell membrane. Its subcellular location is the recycling endosome membrane. It localises to the cell projection. It is found in the dendritic spine membrane. The protein resides in the synaptic cell membrane. The protein localises to the cell junction. Its subcellular location is the focal adhesion. It carries out the reaction Na(+)(in) + H(+)(out) = Na(+)(out) + H(+)(in). With respect to regulation, ATP-depletion almost completely abolishes SLC9A5 activity. Inhibited by amiloride compounds. In terms of biological role, plasma membrane Na(+)/H(+) antiporter. Mediates the electroneutral exchange of intracellular H(+) ions for extracellular Na(+) in 1:1 stoichiometry, thus regulating intracellular pH homeostasis, in particular in neural tissues. Acts as a negative regulator of dendritic spine growth. Plays a role in postsynaptic remodeling and signaling. Can also contribute to organellar pH regulation, with consequences for receptor tyrosine kinase trafficking. The chain is Sodium/hydrogen exchanger 5 from Homo sapiens (Human).